Reading from the N-terminus, the 212-residue chain is MTSPSSRTPRGSTPPFEPSADELVLHASGRKTAEDRLPGDPSPAALIDRFLRVDQAGEHGAVRIYQGQLAVLGRRSANVGVLRHMLAQEEVHLATFDKLVADRRARPTLLGPLWHVAGFALGAGTALLGEKAAMACTTAIEEAIDGHYKDQYDRLGDDELPLKATIDTFRREELEHRDIGYANGARQAPAFPVLSGAIKAGAKLAIWVSERV.

The segment covering 1-14 (MTSPSSRTPRGSTP) has biased composition (low complexity). The interval 1-22 (MTSPSSRTPRGSTPPFEPSADE) is disordered. Fe cation contacts are provided by glutamate 58, glutamate 89, histidine 92, glutamate 141, glutamate 173, and histidine 176.

This sequence belongs to the COQ7 family. Fe cation serves as cofactor.

It localises to the cell membrane. It carries out the reaction a 5-methoxy-2-methyl-3-(all-trans-polyprenyl)benzene-1,4-diol + AH2 + O2 = a 3-demethylubiquinol + A + H2O. Its pathway is cofactor biosynthesis; ubiquinone biosynthesis. Catalyzes the hydroxylation of 2-nonaprenyl-3-methyl-6-methoxy-1,4-benzoquinol during ubiquinone biosynthesis. The protein is 3-demethoxyubiquinol 3-hydroxylase of Rhodospirillum rubrum (strain ATCC 11170 / ATH 1.1.1 / DSM 467 / LMG 4362 / NCIMB 8255 / S1).